The following is a 139-amino-acid chain: Ribulose bisphosphate carboxylase small subunit (139 aa).

The protein belongs to the RuBisCO small chain family. In terms of assembly, heterohexadecamer of 8 large and 8 small subunits.

The protein resides in the plastid. It is found in the chloroplast. RuBisCO catalyzes two reactions: the carboxylation of D-ribulose 1,5-bisphosphate, the primary event in carbon dioxide fixation, as well as the oxidative fragmentation of the pentose substrate in the photorespiration process. Both reactions occur simultaneously and in competition at the same active site. Although the small subunit is not catalytic it is essential for maximal activity. This is Ribulose bisphosphate carboxylase small subunit from Detonula confervacea (Marine diatom).